An 84-amino-acid chain; its full sequence is MKLCILLVVLLITVVRAEEDILENEAEDISPAIKERSARGCIGRNESCKFDRHGCCWPWSCSCWNKEGQPESDVWCECSLKIGK.

An N-terminal signal peptide occupies residues 1-17 (MKLCILLVVLLITVVRA). Positions 18–38 (EEDILENEAEDISPAIKERSA) are excised as a propeptide. 4 disulfide bridges follow: C41/C56, C48/C61, C55/C78, and C63/C76.

In terms of tissue distribution, expressed by the venom gland.

The protein localises to the secreted. In terms of biological role, antagonist of L-type calcium channels (Cav1/CACNA1). Causes paralysis in the posterior limbs and gradual decreases in movement and aggression during 24 hours at dose levels of 5 ug per mouse. This is U7-ctenitoxin-Pn1a from Phoneutria nigriventer (Brazilian armed spider).